A 365-amino-acid chain; its full sequence is tRNA/tmRNA (uracil-C(5))-methyltransferase (365 aa).

Residues Gln188, Tyr216, Asn221, Glu237, and Asp297 each coordinate S-adenosyl-L-methionine. Residue Cys322 is the Nucleophile of the active site. Residue Glu356 is the Proton acceptor of the active site.

The protein belongs to the class I-like SAM-binding methyltransferase superfamily. RNA M5U methyltransferase family. TrmA subfamily.

The catalysed reaction is uridine(54) in tRNA + S-adenosyl-L-methionine = 5-methyluridine(54) in tRNA + S-adenosyl-L-homocysteine + H(+). It catalyses the reaction uridine(341) in tmRNA + S-adenosyl-L-methionine = 5-methyluridine(341) in tmRNA + S-adenosyl-L-homocysteine + H(+). In terms of biological role, dual-specificity methyltransferase that catalyzes the formation of 5-methyluridine at position 54 (m5U54) in all tRNAs, and that of position 341 (m5U341) in tmRNA (transfer-mRNA). The chain is tRNA/tmRNA (uracil-C(5))-methyltransferase from Aggregatibacter aphrophilus (strain NJ8700) (Haemophilus aphrophilus).